A 1035-amino-acid chain; its full sequence is NHS-like protein 3 (1035 aa).

V2 carries the N-myristoyl glycine lipid modification. 3 disordered regions span residues 23–44 (KAEN…AVDE), 76–105 (QEKQ…DEDN), and 133–162 (IQRK…RRST). Positions 76-90 (QEKQKLNKGGWDHGD) are enriched in basic and acidic residues. Phosphoserine occurs at positions 93, 138, 145, and 161. The residue at position 162 (T162) is a Phosphothreonine. Position 215 is a phosphoserine (S215). R320 carries the post-translational modification Asymmetric dimethylarginine. Residues S322, S327, S330, S338, S339, S341, and S342 each carry the phosphoserine modification. 2 disordered regions span residues 332–869 (RSLG…APSS) and 885–1035 (SEGL…KELA). Residues 338 to 365 (SSVSSPQPRSRHPSSSSDTWSHSQSSDT) show a composition bias toward low complexity. A compositionally biased stretch (polar residues) spans 366 to 388 (IVSDGSTLSSKGGSEGQPESSTA). Phosphoserine occurs at positions 400, 404, and 409. Residues 411–429 (AEASDTLSIRSSGQLSGRS) are compositionally biased toward polar residues. Over residues 431-449 (SLRKLKRPPPPPRRTHSLH) the composition is skewed to basic residues. Positions 517–532 (RTLSPSSGYSSQSGTP) are enriched in low complexity. Phosphothreonine is present on T531. Residues 543–552 (PASPGKAQPP) are compositionally biased toward pro residues. S545 is subject to Phosphoserine. Residues 562-589 (SPGASVSSSLTSLCSSSSDPAPSDRSGP) are compositionally biased toward low complexity. At T593 the chain carries Phosphothreonine. Over residues 602 to 624 (PPHPKVPAPFSPPPSKPRSPNPA) the composition is skewed to pro residues. S612 carries the post-translational modification Phosphoserine. 2 stretches are compositionally biased toward low complexity: residues 625–645 (APAL…DASP) and 652–662 (QTTLTPLQESP). S669 and S673 each carry phosphoserine. 2 stretches are compositionally biased toward pro residues: residues 669–685 (SPPP…PPPT) and 709–718 (NWPPPPPPAP). Low complexity predominate over residues 737–765 (SVASPEPAGPSGSPELVSSPAASSSSATA). A compositionally biased stretch (pro residues) spans 771–784 (PGSPDPPPAPPAPA). Low complexity predominate over residues 838-848 (GAPTPALGPSA). Residues S858, S862, and S868 each carry the phosphoserine modification. A compositionally biased stretch (pro residues) spans 894 to 906 (NGPPEAEPRPPQS). 4 positions are modified to phosphoserine: S929, S959, S971, and S979. Residues 961–980 (KAPPPVARKPSVGVPPPASP) show a composition bias toward pro residues. The span at 999-1008 (TQDRTKRELA) shows a compositional bias: basic and acidic residues.

In terms of tissue distribution, expressed in lung.

Its function is as follows. Able to directly activate the TNF-NFkappaB signaling pathway. The sequence is that of NHS-like protein 3 from Homo sapiens (Human).